Consider the following 289-residue polypeptide: Glycine--tRNA ligase alpha subunit (289 aa).

Belongs to the class-II aminoacyl-tRNA synthetase family. Tetramer of two alpha and two beta subunits.

The protein resides in the cytoplasm. It carries out the reaction tRNA(Gly) + glycine + ATP = glycyl-tRNA(Gly) + AMP + diphosphate. This chain is Glycine--tRNA ligase alpha subunit, found in Rickettsia typhi (strain ATCC VR-144 / Wilmington).